We begin with the raw amino-acid sequence, 667 residues long: UvrABC system protein B (667 aa).

Residues 28–185 (NNFKQGLKEQ…NKLIELKYQR (158 aa)) form the Helicase ATP-binding domain. ATP is bound at residue 41-48 (GATGTGKT). The Beta-hairpin motif lies at 94 to 117 (YYDYYQPEAYVASSDTYIEKDSKI). The Helicase C-terminal domain maps to 432 to 594 (QMDDLYFEIK…VTPTALNKTI (163 aa)). The UVR domain maps to 629–664 (NKEIKRLQKTMKEAAKALDFEKAATLRDLILDLEKK).

This sequence belongs to the UvrB family. In terms of assembly, forms a heterotetramer with UvrA during the search for lesions. Interacts with UvrC in an incision complex.

It is found in the cytoplasm. Its function is as follows. The UvrABC repair system catalyzes the recognition and processing of DNA lesions. A damage recognition complex composed of 2 UvrA and 2 UvrB subunits scans DNA for abnormalities. Upon binding of the UvrA(2)B(2) complex to a putative damaged site, the DNA wraps around one UvrB monomer. DNA wrap is dependent on ATP binding by UvrB and probably causes local melting of the DNA helix, facilitating insertion of UvrB beta-hairpin between the DNA strands. Then UvrB probes one DNA strand for the presence of a lesion. If a lesion is found the UvrA subunits dissociate and the UvrB-DNA preincision complex is formed. This complex is subsequently bound by UvrC and the second UvrB is released. If no lesion is found, the DNA wraps around the other UvrB subunit that will check the other stand for damage. This chain is UvrABC system protein B, found in Aster yellows witches'-broom phytoplasma (strain AYWB).